The following is a 200-amino-acid chain: NADH-quinone oxidoreductase chain 10 (200 aa).

Transmembrane regions (helical) follow at residues 2-22 (MTFAFYLFAISACVAGFMVVI), 26-46 (PVHSVLWLILAFLSAAGLFVL), 51-71 (FVAMLLVVVYVGAVAVLFLFV), 90-110 (LPLALVIGVVLLAQLGIAFSG), and 144-164 (VLMFQLAGLVLLVAMIGAIVL).

It belongs to the complex I subunit 6 family. As to quaternary structure, NDH-1 is composed of at least 14 different subunits, Nqo1 to Nqo14. The complex has a L-shaped structure, with the hydrophobic arm (subunits Nqo7, Nqo8, Nqo10 to Nqo14) embedded in the inner membrane and the hydrophilic peripheral arm (subunits Nqo1 to Nqo6, Nqo9) protruding into the bacterial cytoplasm. The hydrophilic domain contains all the redox centers.

The protein resides in the cell inner membrane. The enzyme catalyses a quinone + NADH + 5 H(+)(in) = a quinol + NAD(+) + 4 H(+)(out). Functionally, NDH-1 shuttles electrons from NADH, via FMN and iron-sulfur (Fe-S) centers, to quinones in the respiratory chain. The immediate electron acceptor for the enzyme in this species is believed to be ubiquinone. Couples the redox reaction to proton translocation (for every two electrons transferred, four hydrogen ions are translocated across the cytoplasmic membrane), and thus conserves the redox energy in a proton gradient. The protein is NADH-quinone oxidoreductase chain 10 of Paracoccus denitrificans.